A 113-amino-acid chain; its full sequence is Probable UPF0122 protein (113 aa).

It belongs to the UPF0122 family.

Might take part in the signal recognition particle (SRP) pathway. This is inferred from the conservation of its genetic proximity to ftsY/ffh. May be a regulatory protein. In Mycoplasma mycoides, this protein is Probable UPF0122 protein.